A 96-amino-acid chain; its full sequence is Large ribosomal subunit protein uL23cz (96 aa).

The protein belongs to the universal ribosomal protein uL23 family. In terms of assembly, part of the 50S ribosomal subunit.

The protein localises to the plastid. It is found in the chloroplast. In terms of biological role, binds to 23S rRNA. The polypeptide is Large ribosomal subunit protein uL23cz (rpl23-A) (Sorghum bicolor (Sorghum)).